A 341-amino-acid chain; its full sequence is UDP-3-O-(3-hydroxymyristoyl)glucosamine N-acyltransferase (341 aa).

The Proton acceptor role is filled by His-239.

This sequence belongs to the transferase hexapeptide repeat family. LpxD subfamily. In terms of assembly, homotrimer.

The enzyme catalyses a UDP-3-O-[(3R)-3-hydroxyacyl]-alpha-D-glucosamine + a (3R)-hydroxyacyl-[ACP] = a UDP-2-N,3-O-bis[(3R)-3-hydroxyacyl]-alpha-D-glucosamine + holo-[ACP] + H(+). It catalyses the reaction UDP-3-O-[(3R)-3-hydroxytetradecanoyl]-alpha-D-glucosamine + (3R)-hydroxytetradecanoyl-[ACP] = UDP-2-N,3-O-bis[(3R)-3-hydroxytetradecanoyl]-alpha-D-glucosamine + holo-[ACP] + H(+). It participates in glycolipid biosynthesis; lipid IV(A) biosynthesis; lipid IV(A) from (3R)-3-hydroxytetradecanoyl-[acyl-carrier-protein] and UDP-N-acetyl-alpha-D-glucosamine: step 3/6. Functionally, catalyzes the N-acylation of UDP-3-O-(hydroxytetradecanoyl)glucosamine using 3-hydroxytetradecanoyl-ACP as the acyl donor. Is involved in the biosynthesis of lipid A, a phosphorylated glycolipid that anchors the lipopolysaccharide to the outer membrane of the cell. The protein is UDP-3-O-(3-hydroxymyristoyl)glucosamine N-acyltransferase of Salmonella paratyphi A (strain ATCC 9150 / SARB42).